The primary structure comprises 355 residues: Histidinol-phosphate aminotransferase 2 (355 aa).

Lys210 bears the N6-(pyridoxal phosphate)lysine mark.

This sequence belongs to the class-II pyridoxal-phosphate-dependent aminotransferase family. Histidinol-phosphate aminotransferase subfamily. In terms of assembly, homodimer. Pyridoxal 5'-phosphate serves as cofactor.

The enzyme catalyses L-histidinol phosphate + 2-oxoglutarate = 3-(imidazol-4-yl)-2-oxopropyl phosphate + L-glutamate. It participates in amino-acid biosynthesis; L-histidine biosynthesis; L-histidine from 5-phospho-alpha-D-ribose 1-diphosphate: step 7/9. The protein is Histidinol-phosphate aminotransferase 2 of Gluconobacter oxydans (strain 621H) (Gluconobacter suboxydans).